Reading from the N-terminus, the 329-residue chain is Malate dehydrogenase (329 aa).

An NAD(+)-binding site is contributed by Gly12–Gly18. Substrate is bound by residues Arg95 and Arg101. NAD(+) contacts are provided by residues Asn108, Gln115, and Val132–Asn134. 2 residues coordinate substrate: Asn134 and Arg165. The active-site Proton acceptor is the His190.

The protein belongs to the LDH/MDH superfamily. MDH type 2 family.

It carries out the reaction (S)-malate + NAD(+) = oxaloacetate + NADH + H(+). Functionally, catalyzes the reversible oxidation of malate to oxaloacetate. The chain is Malate dehydrogenase from Polynucleobacter necessarius subsp. necessarius (strain STIR1).